Reading from the N-terminus, the 390-residue chain is Homeobox protein Meis1 (390 aa).

Positions glycine 108–aspartate 191 constitute an MEIS N-terminal domain. A compositionally biased stretch (basic and acidic residues) spans aspartate 188–threonine 202. Residues aspartate 188–phenylalanine 279 form a disordered region. Residues arginine 272–methionine 334 constitute a DNA-binding region (homeobox; TALE-type). Residues tyrosine 299–arginine 329 form an interaction with DNA region.

This sequence belongs to the TALE/MEIS homeobox family. Interacts with pbx1 isoform b. As to expression, in the embryo, displays a broad expression pattern with high levels observed in tissues of neural cell fate such as midbrain, hindbrain, dorsal portion of the neural tube, and neural crest-derived branchial arches. Widely expressed in the adult with highest levels in brain and spleen.

It localises to the cytoplasm. The protein localises to the nucleus. Functionally, induces expression of a number of neural crest marker genes as part of a heterodimer with isoform b of pbx1, to specify neural crest cell fate. Binds to a highly conserved region in the promoter of the neural crest marker gene zic3. The sequence is that of Homeobox protein Meis1 (meis1) from Xenopus laevis (African clawed frog).